Here is a 61-residue protein sequence, read N- to C-terminus: Small ribosomal subunit protein uS14 (61 aa).

4 residues coordinate Zn(2+): Cys24, Cys27, Cys40, and Cys43.

It belongs to the universal ribosomal protein uS14 family. Zinc-binding uS14 subfamily. Part of the 30S ribosomal subunit. Contacts proteins S3 and S10. Zn(2+) serves as cofactor.

In terms of biological role, binds 16S rRNA, required for the assembly of 30S particles and may also be responsible for determining the conformation of the 16S rRNA at the A site. This chain is Small ribosomal subunit protein uS14, found in Thermotoga neapolitana (strain ATCC 49049 / DSM 4359 / NBRC 107923 / NS-E).